The primary structure comprises 554 residues: DNA mismatch repair protein MutL (554 aa).

The protein belongs to the DNA mismatch repair MutL/HexB family.

Functionally, this protein is involved in the repair of mismatches in DNA. It is required for dam-dependent methyl-directed DNA mismatch repair. May act as a 'molecular matchmaker', a protein that promotes the formation of a stable complex between two or more DNA-binding proteins in an ATP-dependent manner without itself being part of a final effector complex. This is DNA mismatch repair protein MutL from Crocosphaera subtropica (strain ATCC 51142 / BH68) (Cyanothece sp. (strain ATCC 51142)).